The sequence spans 297 residues: uncharacterized protein (297 aa).

Helical transmembrane passes span 1–21 (MSWI…LGII), 32–52 (GSIL…IYVY), 72–92 (AMAL…NIPS), 98–118 (VLFF…YGGI), 120–140 (LIHK…ATGI), 194–214 (ILIE…IFAI), 218–238 (VYII…LFFC), 253–273 (LALI…IEIP), and 274–294 (AYIS…ASIL).

The protein belongs to the TerC family.

It localises to the cell membrane. This is an uncharacterized protein from Rickettsia prowazekii (strain Madrid E).